A 363-amino-acid polypeptide reads, in one-letter code: DNA repair protein rlp1 (363 aa).

It belongs to the RecA family. RAD51 subfamily. Interacts with rdl1 and sws1.

It localises to the cytoplasm. The protein resides in the nucleus. Required for normal levels of meiotic recombination. Acts in the recombinational pathway of double-strand break (DSB) repair together with rhp51, rhp55 and rad22. Required for the full extent of DNA recombination and cell survival under condition of a replication fork collapse. The sequence is that of DNA repair protein rlp1 from Schizosaccharomyces pombe (strain 972 / ATCC 24843) (Fission yeast).